A 531-amino-acid chain; its full sequence is UDP-glucuronosyltransferase 1A6 (531 aa).

An N-terminal signal peptide occupies residues Met-1–Gly-26. N-linked (GlcNAc...) asparagine glycosylation occurs at Asn-294. The helical transmembrane segment at Val-489–Phe-505 threads the bilayer.

This sequence belongs to the UDP-glycosyltransferase family.

The protein localises to the microsome. The protein resides in the endoplasmic reticulum membrane. The catalysed reaction is glucuronate acceptor + UDP-alpha-D-glucuronate = acceptor beta-D-glucuronoside + UDP + H(+). The enzyme catalyses (5Z,8Z,11Z,14Z)-eicosatetraenoate + UDP-alpha-D-glucuronate = O-[(5Z),(8Z),(11Z),(14Z)-eicosatetraenoyl]-beta-D-glucuronate + UDP. It carries out the reaction 15-hydroxy-(5Z,8Z,11Z,13E)-eicosatetraenoate + UDP-alpha-D-glucuronate = 15-O-(beta-D-glucuronosyl)-(5Z,8Z,11Z,14Z)-eicosatetraenoate + UDP + H(+). It catalyses the reaction (E)-ferulate + UDP-alpha-D-glucuronate = (E)-4-O-(beta-D-glucuronosyl)-ferulate + UDP + H(+). The catalysed reaction is (E)-ferulate + UDP-alpha-D-glucuronate = (E)-ferulic acid beta-D-glucuronate ester + UDP. Its function is as follows. UDP-glucuronosyltransferase (UGT) that catalyzes phase II biotransformation reactions in which lipophilic substrates are conjugated with glucuronic acid to facilitate their inactivation and excretion from the body. Essential for the elimination and detoxification of drugs, xenobiotics and endogenous compounds. Involved in the glucuronidation of arachidonic acid (AA) and AA-derived eicosanoids including 15-HETE and 20-HETE. Conjugates small planar phenolic molecules such as 4-nitrophenol, 1-naphthol, and 4-methylumbelliferone. The bulky phenol 4-hydroxybiphenyl, androgens and estrogens are not substrates. 2-hydroxybiphenyl is an excellent substrate. Involved in the glucuronidation of the phytochemical ferulic acid at the phenolic or the carboxylic acid group. In Oryctolagus cuniculus (Rabbit), this protein is UDP-glucuronosyltransferase 1A6 (UGT1).